The chain runs to 346 residues: Sesquiterpene synthase Agr1 (346 aa).

Mg(2+) is bound by residues Asp-98, Asn-234, Ser-238, and Glu-242. The DDXXD motif motif lies at 98–102 (DNLSD). 2 residues coordinate (2E,6E)-farnesyl diphosphate: Arg-322 and Tyr-323.

This sequence belongs to the terpene synthase family. It depends on Mg(2+) as a cofactor.

The catalysed reaction is (2E,6E)-farnesyl diphosphate = delta-cadinene + diphosphate. It carries out the reaction (2E,6E)-farnesyl diphosphate = alpha-muurolene + diphosphate. It catalyses the reaction (2E,6E)-farnesyl diphosphate = gamma-muurolene + diphosphate. The enzyme catalyses (2E,6E)-farnesyl diphosphate = alpha-selinene + diphosphate. Terpene cyclase that catalyzes the cyclization of farnesyl diphosphate (FPP) to various sesquiterpenes, including alpha-muurolene, gamma-muurolene, alpha-selinene, beta-selinene, delta-cadinene, alpha-cadinol and delta-cadinol. Delta-cadinene is the major product of Agr1. The chain is Sesquiterpene synthase Agr1 from Cyclocybe aegerita (Black poplar mushroom).